The primary structure comprises 449 residues: Na(+)/H(+) antiporter NhaA 2 (449 aa).

The next 11 membrane-spanning stretches (helical) occupy residues 32 to 52 (IEATSGAVLLLATVVALTLSN), 87 to 107 (GLMTLFFFIVALEIKREVVLG), 114 to 134 (MVALSVVAAAGGMLVPMGLYL), 145 to 165 (GWGVVMPTDTAFVIGCLALLG), 174 to 194 (VFLLSLAVVDDLAAILVVAVG), 202 to 222 (TALALGAVGLVIIRGMALLGV), 233 to 253 (AIIWLAVNASGIHATIVGVIL), 318 to 338 (WVAFGVMPLFALANAGVPITI), 347 to 367 (LAVMAGFVLGKPIGVTAFAWL), 382 to 402 (WGGLVGGALLTGIGFTMALFI), and 417 to 437 (LGILAASVVSSVAGLTLLCAL).

This sequence belongs to the NhaA Na(+)/H(+) (TC 2.A.33) antiporter family.

Its subcellular location is the cell inner membrane. It carries out the reaction Na(+)(in) + 2 H(+)(out) = Na(+)(out) + 2 H(+)(in). In terms of biological role, na(+)/H(+) antiporter that extrudes sodium in exchange for external protons. The sequence is that of Na(+)/H(+) antiporter NhaA 2 from Acidiphilium cryptum (strain JF-5).